A 449-amino-acid polypeptide reads, in one-letter code: Early 53 kDa protein (449 aa).

The interval 1 to 68 is disordered; that stretch reads MNRFFRENNI…CTSPAKPLEH (68 aa). Positions 31-42 are enriched in pro residues; sequence NSPPSPVRPPPK. Residues 379–399 form a C4-type zinc finger; that stretch reads CKLCKKTKLYYKNPVLYCTKC.

It is found in the virion. Its subcellular location is the host cytoplasm. The protein localises to the host nucleus. It localises to the host cell membrane. Its function is as follows. May act as a packaging protein or as a structural component associated with intranuclear baculovirus virion assembly. The sequence is that of Early 53 kDa protein (ME53) from Autographa californica nuclear polyhedrosis virus (AcMNPV).